The chain runs to 435 residues: Actin-like protein 7A (435 aa).

Disordered regions lie at residues 1–20 and 29–65; these read MWAP…VGNQ and QTAS…ERPK. Positions 31-51 are required for interaction with TES; that stretch reads ASLRDGPAKRAVWVRRRSSEP. Basic and acidic residues predominate over residues 47-65; it reads RSSEPQEPTESKAAKERPK.

It belongs to the actin family. In terms of assembly, interacts (via N-terminus) with TES (via LIM domain 2). Heterodimer with TES; the heterodimer interacts with ENAH to form a heterotrimer. Interacts with ACTL9. Interacts with CYLC1; the interaction may be relevant for proper acrosome attachment to the nuclear envelope.

The protein resides in the cytoplasm. It localises to the cytoskeleton. Its subcellular location is the golgi apparatus. It is found in the nucleus. Essential for normal spermatogenesis and male fertility. Required for normal sperm head morphology, acroplaxome formation, acrosome attachment, and acrosome granule stability. May anchor and stabilize acrosomal adherence to the acroplaxome at least in part by facilitating the presence of F-actin in the subacrosomal space. May play an important role in formation and fusion of Golgi-derived vesicles during acrosome biogenesis. The chain is Actin-like protein 7A (ACTL7A) from Macaca fascicularis (Crab-eating macaque).